A 202-amino-acid polypeptide reads, in one-letter code: MPTPTKGPRLGGGPAHEKLILANLATALFEHRSITTTEAKAKRLRPHAEKLISFAKKGDLASRRQVMKTIRDKSVVHFLFTEIGPAMAERNGGYTRIVKIGPRKGDNAPMAVIQLVMEPVSAKQGVVREAERAAAVSAPAADEVVVGDEAPAAESTDAAQVEAGGVEQPDTLPDADAPATADEGVEVDAAEVDPSDEKKDQA.

Positions 148 to 202 are disordered; it reads DEAPAAESTDAAQVEAGGVEQPDTLPDADAPATADEGVEVDAAEVDPSDEKKDQA. Residues 169–182 are compositionally biased toward low complexity; it reads PDTLPDADAPATAD. Acidic residues predominate over residues 183–194; the sequence is EGVEVDAAEVDP.

The protein belongs to the bacterial ribosomal protein bL17 family. As to quaternary structure, part of the 50S ribosomal subunit. Contacts protein L32.

This is Large ribosomal subunit protein bL17 from Kineococcus radiotolerans (strain ATCC BAA-149 / DSM 14245 / SRS30216).